The primary structure comprises 678 residues: Beta-catenin-like protein hmp-2 (678 aa).

ARM repeat units lie at residues 153 to 192 (RGGP…NLLM), 280 to 319 (PSNK…RNLS), 320 to 359 (DSAT…NLTC), 362 to 403 (TRNK…HCTA), and 409 to 448 (EEAQ…NSAL).

It belongs to the beta-catenin family. As to quaternary structure, component of a core catenin-cadherin complex consisting of hmr-1, hmp-1 and hmp-2; the complex localizes to adherens junctions. Interacts with hmr-1; the interaction is direct. May interact with hmp-1. Interacts with frk-1. As to expression, epidermal cells.

Its subcellular location is the cell junction. It localises to the adherens junction. Functionally, required for cell migration during body enclosure and cell shape changes during body elongation. Plays a role in recruitment of the cadherin protein hmr-1 to adherens junctions. This chain is Beta-catenin-like protein hmp-2 (hmp-2), found in Caenorhabditis elegans.